We begin with the raw amino-acid sequence, 92 residues long: Small ribosomal subunit protein uS19c (92 aa).

Belongs to the universal ribosomal protein uS19 family.

It localises to the plastid. The protein localises to the chloroplast. Protein S19 forms a complex with S13 that binds strongly to the 16S ribosomal RNA. The chain is Small ribosomal subunit protein uS19c from Pinus koraiensis (Korean pine).